The chain runs to 194 residues: Large ribosomal subunit protein bL9 (194 aa).

Positions 169–194 are disordered; that stretch reads DDINDNARPENFFDPNAEFDGGEDNA.

The protein belongs to the bacterial ribosomal protein bL9 family.

Its function is as follows. Binds to the 23S rRNA. The protein is Large ribosomal subunit protein bL9 of Mesorhizobium japonicum (strain LMG 29417 / CECT 9101 / MAFF 303099) (Mesorhizobium loti (strain MAFF 303099)).